A 664-amino-acid polypeptide reads, in one-letter code: NAD(P)H-quinone oxidoreductase chain 5 (664 aa).

Helical transmembrane passes span 7–27, 39–59, 91–111, 120–140, 144–164, 187–207, 219–239, 258–278, 290–310, 327–347, 352–372, 395–415, 420–440, 495–515, 541–561, and 643–663; these read YAWL…IGLI, LNAV…FGLL, HLSA…MIYT, GYVR…GLVF, LVQV…LIGF, FGLL…EFDL, GQIS…GPVA, TPIS…FLVA, AMNV…TIAL, LGYM…FHLM, FKAM…EVVG, ATTF…AGFW, ILGL…ATAG, FPLM…VPWG, FLIM…IASL, and VQFY…FFSV.

It belongs to the complex I subunit 5 family.

It localises to the cell membrane. It catalyses the reaction a plastoquinone + NADH + (n+1) H(+)(in) = a plastoquinol + NAD(+) + n H(+)(out). It carries out the reaction a plastoquinone + NADPH + (n+1) H(+)(in) = a plastoquinol + NADP(+) + n H(+)(out). Functionally, NDH-1 shuttles electrons from NAD(P)H, via FMN and iron-sulfur (Fe-S) centers, to quinones in the respiratory chain. The immediate electron acceptor for the enzyme in this species is believed to be plastoquinone. Couples the redox reaction to proton translocation (for every two electrons transferred, four hydrogen ions are translocated across the cytoplasmic membrane), and thus conserves the redox energy in a proton gradient. The sequence is that of NAD(P)H-quinone oxidoreductase chain 5 (ndhF) from Picosynechococcus sp. (strain ATCC 27264 / PCC 7002 / PR-6) (Agmenellum quadruplicatum).